A 260-amino-acid polypeptide reads, in one-letter code: Ribosomal RNA small subunit methyltransferase G (260 aa).

Residues Gly94, Phe99, 117 to 119, 145 to 146, and Arg164 each bind S-adenosyl-L-methionine; these read DSS and AE.

Belongs to the methyltransferase superfamily. RNA methyltransferase RsmG family.

It is found in the cytoplasm. Specifically methylates the N7 position of a guanine in 16S rRNA. This Synechococcus sp. (strain JA-3-3Ab) (Cyanobacteria bacterium Yellowstone A-Prime) protein is Ribosomal RNA small subunit methyltransferase G.